A 398-amino-acid polypeptide reads, in one-letter code: Subtilisin-like protease CPC735_015300 (398 aa).

The N-terminal stretch at 1-19 (MGFIKTLSLSLAAASAANA) is a signal peptide. Positions 20–116 (AKILSPSRPD…IEHDHVVRLT (97 aa)) are excised as a propeptide. The Inhibitor I9 domain maps to 35-115 (QYIVVMKDGV…FIEHDHVVRL (81 aa)). One can recognise a Peptidase S8 domain in the interval 126-398 (TWGLGRVSHQ…NKLTYNGNGQ (273 aa)). Active-site charge relay system residues include D158 and H189. A glycan (N-linked (GlcNAc...) asparagine) is linked at N250. S344 acts as the Charge relay system in catalysis. An N-linked (GlcNAc...) asparagine glycan is attached at N362.

The protein belongs to the peptidase S8 family.

Its subcellular location is the secreted. In terms of biological role, secreted subtilisin-like serine protease with keratinolytic activity that contributes to pathogenicity. This is Subtilisin-like protease CPC735_015300 from Coccidioides posadasii (strain C735) (Valley fever fungus).